Reading from the N-terminus, the 359-residue chain is Putative B3 domain-containing protein At3g24850 (359 aa).

2 disordered regions span residues 92-111 (DSEI…LQNS) and 159-192 (EKME…KRTG). The span at 100 to 111 (TSDSQMKTLQNS) shows a compositional bias: polar residues. The segment at residues 250 to 351 (FNNLLQNDFL…VLCFAMEQSS (102 aa)) is a DNA-binding region (TF-B3).

The protein resides in the nucleus. This Arabidopsis thaliana (Mouse-ear cress) protein is Putative B3 domain-containing protein At3g24850.